The chain runs to 125 residues: UPF0538 protein C2C4.04c (125 aa).

This sequence belongs to the UPF0538 family.

The protein is UPF0538 protein C2C4.04c of Schizosaccharomyces pombe (strain 972 / ATCC 24843) (Fission yeast).